The sequence spans 339 residues: Ketol-acid reductoisomerase (NADP(+)) (339 aa).

Positions 1–182 (MRVYYDRDAD…GGGRSGVIET (182 aa)) constitute a KARI N-terminal Rossmann domain. Residues 24-27 (YGSQ), R48, S51, T53, and 83-86 (DELQ) contribute to the NADP(+) site. Residue H108 is part of the active site. An NADP(+)-binding site is contributed by G134. The KARI C-terminal knotted domain occupies 183 to 328 (TFKEECETDL…GKLRAMMPWI (146 aa)). Mg(2+) is bound by residues D191, E195, E227, and E231. S252 serves as a coordination point for substrate.

This sequence belongs to the ketol-acid reductoisomerase family. The cofactor is Mg(2+).

It catalyses the reaction (2R)-2,3-dihydroxy-3-methylbutanoate + NADP(+) = (2S)-2-acetolactate + NADPH + H(+). The catalysed reaction is (2R,3R)-2,3-dihydroxy-3-methylpentanoate + NADP(+) = (S)-2-ethyl-2-hydroxy-3-oxobutanoate + NADPH + H(+). The protein operates within amino-acid biosynthesis; L-isoleucine biosynthesis; L-isoleucine from 2-oxobutanoate: step 2/4. Its pathway is amino-acid biosynthesis; L-valine biosynthesis; L-valine from pyruvate: step 2/4. Involved in the biosynthesis of branched-chain amino acids (BCAA). Catalyzes an alkyl-migration followed by a ketol-acid reduction of (S)-2-acetolactate (S2AL) to yield (R)-2,3-dihydroxy-isovalerate. In the isomerase reaction, S2AL is rearranged via a Mg-dependent methyl migration to produce 3-hydroxy-3-methyl-2-ketobutyrate (HMKB). In the reductase reaction, this 2-ketoacid undergoes a metal-dependent reduction by NADPH to yield (R)-2,3-dihydroxy-isovalerate. This chain is Ketol-acid reductoisomerase (NADP(+)), found in Brucella melitensis biotype 2 (strain ATCC 23457).